We begin with the raw amino-acid sequence, 74 residues long: Small integral membrane protein 15 (74 aa).

The helical transmembrane segment at 20-40 (YGFLTTVILVLTPLFIISAAL) threads the bilayer. Positions 48 to 74 (IETREREQKKKRKRQENIVKAKRAKKD) form a coiled coil. Residues 53-74 (REQKKKRKRQENIVKAKRAKKD) are disordered. A compositionally biased stretch (basic residues) spans 56–74 (KKKRKRQENIVKAKRAKKD).

It belongs to the SMIM15 family.

It is found in the membrane. The polypeptide is Small integral membrane protein 15 (SMIM15) (Gallus gallus (Chicken)).